Consider the following 131-residue polypeptide: Small ribosomal subunit protein uS8 (131 aa).

The protein belongs to the universal ribosomal protein uS8 family. Part of the 30S ribosomal subunit. Contacts proteins S5 and S12.

Functionally, one of the primary rRNA binding proteins, it binds directly to 16S rRNA central domain where it helps coordinate assembly of the platform of the 30S subunit. In Nitrosomonas europaea (strain ATCC 19718 / CIP 103999 / KCTC 2705 / NBRC 14298), this protein is Small ribosomal subunit protein uS8.